An 890-amino-acid polypeptide reads, in one-letter code: Leucine--tRNA ligase (890 aa).

The 'HIGH' region signature appears at 48–58; sequence PYPSGKLHMGH. Residues 645–649 carry the 'KMSKS' region motif; the sequence is KMSKS. K648 is an ATP binding site.

This sequence belongs to the class-I aminoacyl-tRNA synthetase family.

The protein localises to the cytoplasm. It catalyses the reaction tRNA(Leu) + L-leucine + ATP = L-leucyl-tRNA(Leu) + AMP + diphosphate. This is Leucine--tRNA ligase from Polynucleobacter necessarius subsp. necessarius (strain STIR1).